Here is a 331-residue protein sequence, read N- to C-terminus: Ketol-acid reductoisomerase (NADP(+)) (331 aa).

The KARI N-terminal Rossmann domain maps to 2-182; the sequence is ARMYYDEDGN…GGTRAGILET (181 aa). NADP(+) is bound by residues 25-28, serine 51, serine 53, and 83-86; these read YGSQ and DEVQ. Histidine 108 is an active-site residue. Position 134 (glycine 134) interacts with NADP(+). The KARI C-terminal knotted domain maps to 183–328; sequence SFREETETDL…KDLRAMFSWL (146 aa). Mg(2+) contacts are provided by aspartate 191, glutamate 195, glutamate 227, and glutamate 231. Serine 252 provides a ligand contact to substrate.

The protein belongs to the ketol-acid reductoisomerase family. It depends on Mg(2+) as a cofactor.

It catalyses the reaction (2R)-2,3-dihydroxy-3-methylbutanoate + NADP(+) = (2S)-2-acetolactate + NADPH + H(+). The catalysed reaction is (2R,3R)-2,3-dihydroxy-3-methylpentanoate + NADP(+) = (S)-2-ethyl-2-hydroxy-3-oxobutanoate + NADPH + H(+). Its pathway is amino-acid biosynthesis; L-isoleucine biosynthesis; L-isoleucine from 2-oxobutanoate: step 2/4. The protein operates within amino-acid biosynthesis; L-valine biosynthesis; L-valine from pyruvate: step 2/4. In terms of biological role, involved in the biosynthesis of branched-chain amino acids (BCAA). Catalyzes an alkyl-migration followed by a ketol-acid reduction of (S)-2-acetolactate (S2AL) to yield (R)-2,3-dihydroxy-isovalerate. In the isomerase reaction, S2AL is rearranged via a Mg-dependent methyl migration to produce 3-hydroxy-3-methyl-2-ketobutyrate (HMKB). In the reductase reaction, this 2-ketoacid undergoes a metal-dependent reduction by NADPH to yield (R)-2,3-dihydroxy-isovalerate. The protein is Ketol-acid reductoisomerase (NADP(+)) of Gloeothece citriformis (strain PCC 7424) (Cyanothece sp. (strain PCC 7424)).